A 357-amino-acid polypeptide reads, in one-letter code: Probable leucine aminopeptidase MCYG_04170 (357 aa).

The first 15 residues, 1-15 (MKVLAALALSALALA), serve as a signal peptide directing secretion. An N-linked (GlcNAc...) asparagine glycan is attached at Asn76. Residues His167 and Asp185 each coordinate Zn(2+). Asn186 is a glycosylation site (N-linked (GlcNAc...) asparagine). The Zn(2+) site is built by Glu224 and Asp251. Cys291 and Cys295 are joined by a disulfide. His324 provides a ligand contact to Zn(2+).

This sequence belongs to the peptidase M28 family. M28E subfamily. In terms of assembly, monomer. It depends on Zn(2+) as a cofactor.

The protein localises to the secreted. Probable extracellular aminopeptidase which contributes to pathogenicity. The sequence is that of Probable leucine aminopeptidase MCYG_04170 from Arthroderma otae (strain ATCC MYA-4605 / CBS 113480) (Microsporum canis).